Here is a 1346-residue protein sequence, read N- to C-terminus: Toll-like receptor Tollo (1346 aa).

The signal sequence occupies residues 1-21; sequence MLATTHMLYVLIATCVIPIFG. The Extracellular segment spans residues 22–1021; it reads AALSKTVLYQ…NQPPKLDYIP (1000 aa). Residues asparagine 63, asparagine 112, and asparagine 126 are each glycosylated (N-linked (GlcNAc...) asparagine). LRR repeat units follow at residues 97–120, 124–146, 151–174, 176–198, 209–232, 234–256, 257–280, 282–304, 306–330, 331–354, 355–378, 380–402, 404–426, 427–450, 452–473, 474–497, 498–521, 523–544, 546–568, 570–591, 593–614, 615–637, and 638–661; these read LVEL…SFRG, LRNL…MASN, FRQL…MVCP, KSLQ…YFSA, GSTL…MLSA, GRLT…AFEG, LLSL…LFAE, KQLQ…IFGE, AELL…TFVG, LKRL…IFRP, LASL…IFAD, TNLH…TLQG, KNLL…SLVN, CSQL…LAHV, LLKT…SITQ, LESL…VFDR, MSSL…SLQR, SQLQ…LFTE, PNLV…HIPI, LQWL…EIES, LSLS…SSIP, NSVE…TFFK, and KPNL…ALRL. Asparagine 182 is a glycosylation site (N-linked (GlcNAc...) asparagine). Residue asparagine 291 is glycosylated (N-linked (GlcNAc...) asparagine). Residue asparagine 426 is glycosylated (N-linked (GlcNAc...) asparagine). N-linked (GlcNAc...) asparagine glycosylation is present at asparagine 468. Asparagine 505 carries N-linked (GlcNAc...) asparagine glycosylation. N-linked (GlcNAc...) asparagine glycosylation is present at asparagine 552. An N-linked (GlcNAc...) asparagine glycan is attached at asparagine 640. Disulfide bonds link cysteine 682/cysteine 710, cysteine 684/cysteine 733, cysteine 757/cysteine 763, and cysteine 761/cysteine 776. LRR repeat units follow at residues 790–813, 814–837, 838–861, 863–885, 887–909, and 912–938; these read PMDS…AFIG, RKRL…TFYG, LLEL…EFQG, DNLQ…TFTH, YHLK…NFLP, and LNEL…YINR. N-linked (GlcNAc...) asparagine glycosylation is found at asparagine 823 and asparagine 832. A disulfide bridge connects residues cysteine 924 and cysteine 950. Residues asparagine 956 and asparagine 1000 are each glycosylated (N-linked (GlcNAc...) asparagine). A helical membrane pass occupies residues 1022-1042; that stretch reads ILVAILTAFIFVMICISLVFI. At 1043–1346 the chain is on the cytoplasmic side; sequence FRQEMRVWCH…PTPASRNLHM (304 aa). The TIR domain occupies 1074-1209; that stretch reads KLFDAFVSYS…LFWQKLRFAL (136 aa). The segment at 1235-1346 is disordered; sequence HHHHHVHQQA…PTPASRNLHM (112 aa). The span at 1267 to 1300 shows a compositional bias: low complexity; sequence PGSFRRQPSLHQQQQQQQQIRGNNNTTQQQQQQQ.

It belongs to the Toll-like receptor family. May interact (via the extracellular domain) with 18w (via the extracellular domain).

The protein localises to the cell membrane. It is found in the apical cell membrane. In terms of biological role, toll-related receptor. Probably specific to larval innate immunity. Involved in the tracheal immune response of larvae to Gram-negative and perhaps Gram-positive bacteria; upon infection it negatively regulates the immune deficiency (Imd) signaling cascade specifically in the respiratory epithelium to prevent the overexpression of antimicrobial peptides (AMP). Involved in the NF-kappa-B-dependent apoptosis of unfit cells during cell competition. Involved in neuron-specific glycosylation. Positively controls the neuromuscular junction (NMJ) growth in presynaptic motorneurons, probably via the JNK pathway. During development of the peripheral nervous system, may function in the NF-kappa-B (rel) regulatory cascade to repress expression of the neuron-specific genes sc and ase in non-neuronal cells. Promotes heterophilic cell adhesion with 18w in vitro. May have a minor role in leg development. May be involved in determining the proximal cell fate in the wing, possibly by negatively regulating the Dpp signaling pathway. May also be involved in the Dpp signaling pathway in the eye. Possibly functions with 18w and Toll-6 during convergent extension, to help direct proper planar cell polarity, cell intercalation and axis elongation. The protein is Toll-like receptor Tollo of Drosophila melanogaster (Fruit fly).